The chain runs to 964 residues: DNA mismatch repair protein MSH2 (964 aa).

688–695 (GPNMGGKS) is a binding site for ATP. An interaction with MSH6 region spans residues 851–964 (DQSFGIHVAE…YLKYIKALLL (114 aa)).

It belongs to the DNA mismatch repair MutS family. As to quaternary structure, heterodimer consisting of MSH2-MSH6 (MutS alpha) or MSH2-MSH3 (MutS beta). Both heterodimers form a ternary complex with MutL alpha (MLH1-PMS1). MutS beta also forms a ternary complex with MutL beta (MLH1-MLH3), and possibly with a MLH1-MLH2 heterodimer. Both heterodimers interact with proliferating cell nuclear antigen (PCNA/POL30). This interaction is disrupted upon binding of the MutS heterodimers to mismatch DNA. Interacts with SAW1.

The protein resides in the nucleus. Its activity is regulated as follows. Inhibited by Cd(2+). In terms of biological role, component of the post-replicative DNA mismatch repair system (MMR). Forms two different heterodimers: MutS alpha (MSH2-MSH6 heterodimer) and MutS beta (MSH2-MSH3 heterodimer), which bind to DNA mismatches thereby initiating DNA repair. MSH2 seems to act as a scaffold for the other MutS homologs that provide substrate-binding and substrate specificity. When bound, heterodimers bend the DNA helix and shield approximately 20 base pairs. MutS alpha acts mainly to repair base-base and single insertion-deletion mismatches that occur during replication, but can also repair longer insertion-deletion loops (IDLs), although with decreasing efficiency as the size of the extrahelical loop increases. MutS beta acts mainly to repair IDLs from 2 to 13 nucleotides in size, but can also repair base-base and single insertion-deletion mismatches. After mismatch binding, MutS alpha or beta form a ternary complex with a MutL heterodimer, which is thought to be responsible for directing the downstream MMR events, including strand discrimination, excision, and resynthesis. ATP binding and hydrolysis play a pivotal role in mismatch repair functions. Both subunits bind ATP, but with differing affinities, and their ATPase kinetics are also very different. MSH6 binds and hydrolyzes ATP rapidly, whereas MSH2 catalyzes ATP at a substantially slower rate. Binding to a mismatched base pair suppresses MSH6-catalyzed ATP hydrolysis, but not the activity of MSH2. ATP binding to both subunits is necessary to trigger a change in MutS alpha interaction with mismatched DNA, converting MutS alpha into a sliding clamp capable of hydrolysis-independent movement along DNA, and also facilitates formation of ternary complexes containing MutS and MutL proteins and the mismatch. MutS beta also has a role in regulation of heteroduplex formation during mitotic and meiotic recombination. MutS beta binds to DNA flap structures predicted to form during recombination, and is required for 3' non-homologous tail removal (NHTR). MutS beta-binding alters the DNA conformation of its substrate at the ds/ssDNA junction and may facilitate its recognition and/or cleavage by the downstream nucleotide excision repair (NER) RAD1-RAD10 endonuclease. The sequence is that of DNA mismatch repair protein MSH2 (MSH2) from Saccharomyces cerevisiae (strain ATCC 204508 / S288c) (Baker's yeast).